The primary structure comprises 297 residues: uncharacterized protein (297 aa).

Disordered regions lie at residues 19–133 (NEVD…EEKE), 147–214 (AEDD…VGIA), and 226–277 (EKTS…SKEA). Basic and acidic residues predominate over residues 41-52 (EEPKNEKEKHDD). Residues 77–87 (PAEDDEEDEEF) are compositionally biased toward acidic residues. Positions 88-101 (PSQSYGPSIPSNFR) are enriched in polar residues. Basic and acidic residues-rich tracts occupy residues 147–161 (AEDD…REEW) and 236–268 (IHQK…EVRG).

This is an uncharacterized protein from Caenorhabditis elegans.